Reading from the N-terminus, the 472-residue chain is Ras-GEF domain-containing family member 1B (472 aa).

The N-terminal Ras-GEF domain occupies His34–Ala164. Residues Asp204–Pro452 enclose the Ras-GEF domain.

In terms of assembly, interacts with CCDC124 during cytokinesis. Interacts with Ras family proteins.

The protein localises to the early endosome. It is found in the late endosome. It localises to the midbody. Its function is as follows. Guanine nucleotide exchange factor (GEF) with specificity for RAP2A, it doesn't seems to activate other Ras family proteins (in vitro). The protein is Ras-GEF domain-containing family member 1B (RASGEF1B) of Pongo abelii (Sumatran orangutan).